The following is a 336-amino-acid chain: Biotin synthase (336 aa).

Positions 54–281 (NAIQLSTLLS…KAMVRLSAGR (228 aa)) constitute a Radical SAM core domain. [4Fe-4S] cluster contacts are provided by C69, C73, and C76. C113, C144, C204, and R276 together coordinate [2Fe-2S] cluster.

This sequence belongs to the radical SAM superfamily. Biotin synthase family. Homodimer. [4Fe-4S] cluster serves as cofactor. [2Fe-2S] cluster is required as a cofactor.

It carries out the reaction (4R,5S)-dethiobiotin + (sulfur carrier)-SH + 2 reduced [2Fe-2S]-[ferredoxin] + 2 S-adenosyl-L-methionine = (sulfur carrier)-H + biotin + 2 5'-deoxyadenosine + 2 L-methionine + 2 oxidized [2Fe-2S]-[ferredoxin]. Its pathway is cofactor biosynthesis; biotin biosynthesis; biotin from 7,8-diaminononanoate: step 2/2. In terms of biological role, catalyzes the conversion of dethiobiotin (DTB) to biotin by the insertion of a sulfur atom into dethiobiotin via a radical-based mechanism. The chain is Biotin synthase from Burkholderia mallei (strain ATCC 23344).